Here is a 31-residue protein sequence, read N- to C-terminus: Cytochrome b6-f complex subunit 6 (31 aa).

Residues 4–24 (ITSYFGFLLAALTITSALFIG) traverse the membrane as a helical segment.

The protein belongs to the PetL family. In terms of assembly, the 4 large subunits of the cytochrome b6-f complex are cytochrome b6, subunit IV (17 kDa polypeptide, PetD), cytochrome f and the Rieske protein, while the 4 small subunits are PetG, PetL, PetM and PetN. The complex functions as a dimer.

It is found in the plastid. The protein resides in the chloroplast thylakoid membrane. Functionally, component of the cytochrome b6-f complex, which mediates electron transfer between photosystem II (PSII) and photosystem I (PSI), cyclic electron flow around PSI, and state transitions. PetL is important for photoautotrophic growth as well as for electron transfer efficiency and stability of the cytochrome b6-f complex. This chain is Cytochrome b6-f complex subunit 6, found in Gossypium hirsutum (Upland cotton).